The primary structure comprises 172 residues: Large ribosomal subunit protein bL21m (172 aa).

A mitochondrion-targeting transit peptide spans 1–20 (MIRNIGSNLMKSSSSILLRN).

This sequence belongs to the bacterial ribosomal protein bL21 family.

Its subcellular location is the mitochondrion. This Dictyostelium discoideum (Social amoeba) protein is Large ribosomal subunit protein bL21m (mrpl21).